Consider the following 311-residue polypeptide: 4-diphosphocytidyl-2-C-methyl-D-erythritol kinase (311 aa).

Residue K16 is part of the active site. Residue P101–A111 participates in ATP binding. D143 is a catalytic residue.

It belongs to the GHMP kinase family. IspE subfamily.

It carries out the reaction 4-CDP-2-C-methyl-D-erythritol + ATP = 4-CDP-2-C-methyl-D-erythritol 2-phosphate + ADP + H(+). It functions in the pathway isoprenoid biosynthesis; isopentenyl diphosphate biosynthesis via DXP pathway; isopentenyl diphosphate from 1-deoxy-D-xylulose 5-phosphate: step 3/6. Its function is as follows. Catalyzes the phosphorylation of the position 2 hydroxy group of 4-diphosphocytidyl-2C-methyl-D-erythritol. The sequence is that of 4-diphosphocytidyl-2-C-methyl-D-erythritol kinase from Rhodococcus jostii (strain RHA1).